A 261-amino-acid chain; its full sequence is Glutamate racemase (261 aa).

Residues 9-10 and 41-42 each bind substrate; these read DS and YG. Cys-73 (proton donor/acceptor) is an active-site residue. 74–75 contacts substrate; the sequence is NT. Cys-179 functions as the Proton donor/acceptor in the catalytic mechanism. 180–181 is a substrate binding site; the sequence is TH.

The protein belongs to the aspartate/glutamate racemases family.

The enzyme catalyses L-glutamate = D-glutamate. It participates in cell wall biogenesis; peptidoglycan biosynthesis. In terms of biological role, provides the (R)-glutamate required for cell wall biosynthesis. This Aliivibrio fischeri (strain MJ11) (Vibrio fischeri) protein is Glutamate racemase.